A 291-amino-acid chain; its full sequence is Pantothenate synthetase (291 aa).

30–37 (MGYLHAGH) is a binding site for ATP. His37 acts as the Proton donor in catalysis. A (R)-pantoate-binding site is contributed by Gln61. Position 61 (Gln61) interacts with beta-alanine. 147 to 150 (GEKD) lines the ATP pocket. Gln153 is a (R)-pantoate binding site. Residues Val176 and 184 to 187 (LSSR) each bind ATP.

This sequence belongs to the pantothenate synthetase family. As to quaternary structure, homodimer.

The protein localises to the cytoplasm. It carries out the reaction (R)-pantoate + beta-alanine + ATP = (R)-pantothenate + AMP + diphosphate + H(+). The protein operates within cofactor biosynthesis; (R)-pantothenate biosynthesis; (R)-pantothenate from (R)-pantoate and beta-alanine: step 1/1. Catalyzes the condensation of pantoate with beta-alanine in an ATP-dependent reaction via a pantoyl-adenylate intermediate. This is Pantothenate synthetase from Rhizobium rhizogenes (strain K84 / ATCC BAA-868) (Agrobacterium radiobacter).